The following is a 1163-amino-acid chain: Receptor-type guanylate cyclase gcy-21 (1163 aa).

The signal sequence occupies residues 1-17 (MLSAVLLLLFFIQNVQN). The Extracellular segment spans residues 18–490 (FDKIELEDIT…ENCGPPANNT (473 aa)). Residues Asn102, Asn296, Asn322, Asn346, Asn466, and Asn488 are each glycosylated (N-linked (GlcNAc...) asparagine). A helical membrane pass occupies residues 491-511 (FIIVISVGVAVLIGLAIAAAF). Residues 512 to 1163 (LYKRYRYERR…QIQEKTYEFS (652 aa)) are Cytoplasmic-facing. Positions 587–882 (FNTGSTARAG…QIKRKLKPLT (296 aa)) constitute a Protein kinase domain. Residues 593-601 (ARAGPFGPI) and Lys635 each bind ATP. A coiled-coil region spans residues 901 to 930 (TDKLEKDIAERNEELEGEKAKSEALLKMML). The 131-residue stretch at 953 to 1083 (TVFFSDCPGF…DTVNTASRME (131 aa)) folds into the Guanylate cyclase domain.

It belongs to the adenylyl cyclase class-4/guanylyl cyclase family. Expressed in ASG sensory neurons.

The protein resides in the cell membrane. The catalysed reaction is GTP = 3',5'-cyclic GMP + diphosphate. Guanylate cyclase involved in the production of the second messenger cGMP. Plays a role in dauer formation. This is Receptor-type guanylate cyclase gcy-21 from Caenorhabditis elegans.